Reading from the N-terminus, the 487-residue chain is Protein nucleotidyltransferase YdiU (487 aa).

Residues Gly90, Gly92, Arg93, Lys113, Asp125, Gly126, Arg176, and Arg183 each contribute to the ATP site. The active-site Proton acceptor is the Asp252. Mg(2+)-binding residues include Asn253 and Asp262. Residue Asp262 participates in ATP binding.

The protein belongs to the SELO family. The cofactor is Mg(2+). It depends on Mn(2+) as a cofactor.

It catalyses the reaction L-seryl-[protein] + ATP = 3-O-(5'-adenylyl)-L-seryl-[protein] + diphosphate. The catalysed reaction is L-threonyl-[protein] + ATP = 3-O-(5'-adenylyl)-L-threonyl-[protein] + diphosphate. The enzyme catalyses L-tyrosyl-[protein] + ATP = O-(5'-adenylyl)-L-tyrosyl-[protein] + diphosphate. It carries out the reaction L-histidyl-[protein] + UTP = N(tele)-(5'-uridylyl)-L-histidyl-[protein] + diphosphate. It catalyses the reaction L-seryl-[protein] + UTP = O-(5'-uridylyl)-L-seryl-[protein] + diphosphate. The catalysed reaction is L-tyrosyl-[protein] + UTP = O-(5'-uridylyl)-L-tyrosyl-[protein] + diphosphate. Nucleotidyltransferase involved in the post-translational modification of proteins. It can catalyze the addition of adenosine monophosphate (AMP) or uridine monophosphate (UMP) to a protein, resulting in modifications known as AMPylation and UMPylation. In Pseudomonas fluorescens (strain SBW25), this protein is Protein nucleotidyltransferase YdiU.